We begin with the raw amino-acid sequence, 314 residues long: Bifunctional pinoresinol-lariciresinol reductase (314 aa).

NADP(+)-binding positions include 10–16 (GGTGYIG), Arg-35, and Lys-44. The active-site Proton acceptor is the Lys-138. Residue Arg-142 coordinates NADP(+). Residue His-270 participates in substrate binding.

This sequence belongs to the NmrA-type oxidoreductase family. Isoflavone reductase subfamily. Dimer.

It carries out the reaction (+)-lariciresinol + NADP(+) = (+)-pinoresinol + NADPH + H(+). It catalyses the reaction (+)-secoisolariciresinol + NADP(+) = (-)-lariciresinol + NADPH + H(+). Functionally, reductase involved in the lignan justicidin B biosynthesis. Catalyzes the enantioselective conversion of (+)-pinoresinol into (+)-lariciresinol and of (-)-lariciresinol into (+)-secoisolariciresinol. Low activity with the other enantiomers. Abstracts the 4R-hydride from the NADPH cofactor during catalysis. The protein is Bifunctional pinoresinol-lariciresinol reductase (PLR_Lp1) of Linum perenne (Perennial flax).